Reading from the N-terminus, the 373-residue chain is Chorismate synthase (373 aa).

NADP(+)-binding residues include Arg48 and Arg54. FMN contacts are provided by residues 125–127 (RSS), 248–249 (NA), Gly288, 303–307 (KPTSS), and Arg329.

Belongs to the chorismate synthase family. In terms of assembly, homotetramer. It depends on FMNH2 as a cofactor.

It carries out the reaction 5-O-(1-carboxyvinyl)-3-phosphoshikimate = chorismate + phosphate. The protein operates within metabolic intermediate biosynthesis; chorismate biosynthesis; chorismate from D-erythrose 4-phosphate and phosphoenolpyruvate: step 7/7. Functionally, catalyzes the anti-1,4-elimination of the C-3 phosphate and the C-6 proR hydrogen from 5-enolpyruvylshikimate-3-phosphate (EPSP) to yield chorismate, which is the branch point compound that serves as the starting substrate for the three terminal pathways of aromatic amino acid biosynthesis. This reaction introduces a second double bond into the aromatic ring system. The polypeptide is Chorismate synthase (Colwellia psychrerythraea (strain 34H / ATCC BAA-681) (Vibrio psychroerythus)).